Here is an 885-residue protein sequence, read N- to C-terminus: Leucine--tRNA ligase (885 aa).

Positions 43–53 match the 'HIGH' region motif; sequence PYTSGQLHMGH. Residues 571-575 carry the 'KMSKS' region motif; sequence KMSKS. Position 574 (lysine 574) interacts with ATP. Residues 866-885 are disordered; it reads SVANKAEPGRPAIHVDEADD.

It belongs to the class-I aminoacyl-tRNA synthetase family.

The protein localises to the cytoplasm. The catalysed reaction is tRNA(Leu) + L-leucine + ATP = L-leucyl-tRNA(Leu) + AMP + diphosphate. The protein is Leucine--tRNA ligase of Halobacterium salinarum (strain ATCC 700922 / JCM 11081 / NRC-1) (Halobacterium halobium).